The following is a 145-amino-acid chain: 3-dehydroquinate dehydratase (145 aa).

Y23 (proton acceptor) is an active-site residue. Residues N74, H80, and D87 each contribute to the substrate site. Catalysis depends on H100, which acts as the Proton donor. Residues I101–S102 and R111 contribute to the substrate site.

This sequence belongs to the type-II 3-dehydroquinase family. In terms of assembly, homododecamer.

It catalyses the reaction 3-dehydroquinate = 3-dehydroshikimate + H2O. Its pathway is metabolic intermediate biosynthesis; chorismate biosynthesis; chorismate from D-erythrose 4-phosphate and phosphoenolpyruvate: step 3/7. Functionally, catalyzes a trans-dehydration via an enolate intermediate. The protein is 3-dehydroquinate dehydratase of Mycobacterium leprae (strain Br4923).